The primary structure comprises 224 residues: Heme response regulator HssR (224 aa).

The Response regulatory domain occupies 3–116 (QCLVVDDDSR…ELIFRIRAVL (114 aa)). Aspartate 52 bears the 4-aspartylphosphate mark. The segment at residues 124–222 (NSEMTIGNLT…VRGQGYKVEN (99 aa)) is a DNA-binding region (ompR/PhoB-type).

Phosphorylated by HssS.

It localises to the cytoplasm. Its function is as follows. Member of the two-component regulatory system HssS/HssR involved in intracellular heme homeostasis and tempering of staphylococcal virulence. Phosphorylated HssR binds to a direct repeat sequence within hrtAB promoter and activates the expression of hrtAB, an efflux pump, in response to extracellular heme, hemin, hemoglobin or blood. The chain is Heme response regulator HssR (hssR) from Staphylococcus aureus (strain bovine RF122 / ET3-1).